Consider the following 367-residue polypeptide: UDP-N-acetylglucosamine--N-acetylmuramyl-(pentapeptide) pyrophosphoryl-undecaprenol N-acetylglucosamine transferase (367 aa).

Residues 15–17 (TGG), asparagine 126, arginine 169, serine 197, and glutamine 298 each bind UDP-N-acetyl-alpha-D-glucosamine.

The protein belongs to the glycosyltransferase 28 family. MurG subfamily.

It is found in the cell inner membrane. The enzyme catalyses di-trans,octa-cis-undecaprenyl diphospho-N-acetyl-alpha-D-muramoyl-L-alanyl-D-glutamyl-meso-2,6-diaminopimeloyl-D-alanyl-D-alanine + UDP-N-acetyl-alpha-D-glucosamine = di-trans,octa-cis-undecaprenyl diphospho-[N-acetyl-alpha-D-glucosaminyl-(1-&gt;4)]-N-acetyl-alpha-D-muramoyl-L-alanyl-D-glutamyl-meso-2,6-diaminopimeloyl-D-alanyl-D-alanine + UDP + H(+). It functions in the pathway cell wall biogenesis; peptidoglycan biosynthesis. Functionally, cell wall formation. Catalyzes the transfer of a GlcNAc subunit on undecaprenyl-pyrophosphoryl-MurNAc-pentapeptide (lipid intermediate I) to form undecaprenyl-pyrophosphoryl-MurNAc-(pentapeptide)GlcNAc (lipid intermediate II). This Bradyrhizobium sp. (strain BTAi1 / ATCC BAA-1182) protein is UDP-N-acetylglucosamine--N-acetylmuramyl-(pentapeptide) pyrophosphoryl-undecaprenol N-acetylglucosamine transferase.